The following is a 366-amino-acid chain: tRNA/tmRNA (uracil-C(5))-methyltransferase (366 aa).

S-adenosyl-L-methionine contacts are provided by Q190, Y218, N223, E239, and D299. C324 functions as the Nucleophile in the catalytic mechanism. E358 (proton acceptor) is an active-site residue.

It belongs to the class I-like SAM-binding methyltransferase superfamily. RNA M5U methyltransferase family. TrmA subfamily.

The catalysed reaction is uridine(54) in tRNA + S-adenosyl-L-methionine = 5-methyluridine(54) in tRNA + S-adenosyl-L-homocysteine + H(+). The enzyme catalyses uridine(341) in tmRNA + S-adenosyl-L-methionine = 5-methyluridine(341) in tmRNA + S-adenosyl-L-homocysteine + H(+). In terms of biological role, dual-specificity methyltransferase that catalyzes the formation of 5-methyluridine at position 54 (m5U54) in all tRNAs, and that of position 341 (m5U341) in tmRNA (transfer-mRNA). The protein is tRNA/tmRNA (uracil-C(5))-methyltransferase of Shigella flexneri serotype 5b (strain 8401).